Reading from the N-terminus, the 136-residue chain is Outer envelope pore protein 16-4, chloroplastic (136 aa).

Residues 1-59 form a contains 4 beta strands region; the sequence is MEEELLSAVPCSSLTVESVLRVATAGGLYGLCAGPRDARKIGLSGVSQASFVAKSIGRF. Helical transmembrane passes span 18-34, 56-72, 86-102, and 110-126; these read SVLR…LCAG, IGRF…VFTM, WVNA…AVAI, and VVGM…LANC.

Belongs to the Tim17/Tim22/Tim23 family. Plastid outer envelope porin OEP16 (TC 1.B.30) subfamily. Homodimer and oligomers in membrane.

It localises to the plastid. It is found in the chloroplast outer membrane. Functionally, voltage-dependent high-conductance channel with a slight cation-selectivity; selective for amino acids but excludes triosephosphates or uncharged sugars. Non-essential amino acid-selective channel protein and translocation pore for NADPH:protochlorophyllide oxidoreductase A (PORA) and possibly PORB. This is Outer envelope pore protein 16-4, chloroplastic (OEP164) from Arabidopsis thaliana (Mouse-ear cress).